A 297-amino-acid chain; its full sequence is MGFVKVVKNKAYFKRYQVKFRRRREGKTDYYARKRLVIQDKNKYNTPKYRMIVRVTNRDIICQIAYARIEGDMIVCAAYAHELPKYGVKVGLTNYAAAYCTGLLLARRLLNRFGMDKIYEGQVEVTGDEYNVESIDGQPGAFTCYLDAGLARTTTGNKVFGALKGAVDGGLSIPHSTKRFPGYDSESKEFNAEVHRKHIMGQNVADYMRYLMEEDEDAYKKQFSQYIKNNVTPDMMEEMYKKAHAAIRENPVYEKKPKREVKKKRWNRPKMSLAQKKDRVAQKKASFLRAQERAAES.

An N-acetylglycine modification is found at Gly2. 2 positions are modified to N6-acetyllysine: Lys5 and Lys48. The residue at position 185 (Ser185) is a Phosphoserine. Lys220 is modified (N6-acetyllysine; alternate). Lys220 is covalently cross-linked (Glycyl lysine isopeptide (Lys-Gly) (interchain with G-Cter in SUMO1); alternate). Lys220 participates in a covalent cross-link: Glycyl lysine isopeptide (Lys-Gly) (interchain with G-Cter in SUMO2); alternate. Thr232 is modified (phosphothreonine). A disordered region spans residues 253–297 (YEKKPKREVKKKRWNRPKMSLAQKKDRVAQKKASFLRAQERAAES). Residues 258 to 268 (KREVKKKRWNR) are compositionally biased toward basic residues. The residue at position 272 (Ser272) is a Phosphoserine.

This sequence belongs to the universal ribosomal protein uL18 family. Component of the large ribosomal subunit (LSU). Part of the 5S RNP complex, which is a LSU subcomplex composed of the 5S RNA, RPL5 and RPL11. Component of a hexameric 5S RNP precursor complex, composed of 5S RNA, RRS1, RPF2/BXDC1, RPL5, RPL11 and HEATR3; this complex acts as a precursor for ribosome assembly. Interacts with isoform 1 of NVL in an ATP-dependent manner. Interacts with RRP1B. Interacts with IPO5, IPO7 and KPNB1; these interactions may be involved in RPL5 nuclear import for the assembly of ribosomal subunits.

Its subcellular location is the cytoplasm. The protein localises to the nucleus. It is found in the nucleolus. Component of the ribosome, a large ribonucleoprotein complex responsible for the synthesis of proteins in the cell. The small ribosomal subunit (SSU) binds messenger RNAs (mRNAs) and translates the encoded message by selecting cognate aminoacyl-transfer RNA (tRNA) molecules. The large subunit (LSU) contains the ribosomal catalytic site termed the peptidyl transferase center (PTC), which catalyzes the formation of peptide bonds, thereby polymerizing the amino acids delivered by tRNAs into a polypeptide chain. The nascent polypeptides leave the ribosome through a tunnel in the LSU and interact with protein factors that function in enzymatic processing, targeting, and the membrane insertion of nascent chains at the exit of the ribosomal tunnel. As part of the 5S RNP/5S ribonucleoprotein particle it is an essential component of the LSU, required for its formation and the maturation of rRNAs. It also couples ribosome biogenesis to p53/TP53 activation. As part of the 5S RNP it accumulates in the nucleoplasm and inhibits MDM2, when ribosome biogenesis is perturbed, mediating the stabilization and the activation of TP53. The chain is Large ribosomal subunit protein uL18 (RPL5) from Oryctolagus cuniculus (Rabbit).